A 356-amino-acid polypeptide reads, in one-letter code: Methionine import ATP-binding protein MetN (356 aa).

The region spanning 7-250 (IKLDNIDVTF…PRESLTQDFI (244 aa)) is the ABC transporter domain. 43 to 50 (GYSGAGKS) contacts ATP.

It belongs to the ABC transporter superfamily. Methionine importer (TC 3.A.1.24) family. In terms of assembly, the complex is composed of two ATP-binding proteins (MetN), two transmembrane proteins (MetI) and a solute-binding protein (MetQ).

It is found in the cell membrane. The enzyme catalyses L-methionine(out) + ATP + H2O = L-methionine(in) + ADP + phosphate + H(+). It carries out the reaction D-methionine(out) + ATP + H2O = D-methionine(in) + ADP + phosphate + H(+). In terms of biological role, part of the ABC transporter complex MetNIQ involved in methionine import. Responsible for energy coupling to the transport system. In Streptococcus agalactiae serotype Ia (strain ATCC 27591 / A909 / CDC SS700), this protein is Methionine import ATP-binding protein MetN.